The primary structure comprises 321 residues: uncharacterized protein (321 aa).

This is an uncharacterized protein from Acanthamoeba polyphaga (Amoeba).